Reading from the N-terminus, the 956-residue chain is Kinesin heavy chain isoform 5C (956 aa).

Residues 8-327 (SIKVMCRFRP…LMFGQRAKTI (320 aa)) enclose the Kinesin motor domain. ATP-binding residues include Gln87, Ser89, Ser90, Gly91, Lys92, Thr93, His94, and Lys99. The segment at 174 to 315 (VSSPEEVMDV…PSVFNEAETK (142 aa)) is microtubule-binding. Thr403 carries the phosphothreonine modification. Positions 406–923 (VDGISAEKEK…RRAHSAQIAK (518 aa)) form a coiled coil. The segment at 859-956 (CELPKLEKRL…GSSNSTHYQK (98 aa)) is globular. The tract at residues 910-956 (KNMARRAHSAQIAKPIRPGHYPASSPTAVHAVRGGGGGSSNSTHYQK) is disordered.

Belongs to the TRAFAC class myosin-kinesin ATPase superfamily. Kinesin family. Kinesin subfamily. Oligomer composed of two heavy chains and two light chains. Interacts with GRIP1. Interacts with KLC3 and TRAK1. Interacts with ZFYVE27.

The protein resides in the cytoplasm. Its subcellular location is the cytoskeleton. It is found in the cell projection. It localises to the dendrite. The catalysed reaction is ATP + H2O = ADP + phosphate + H(+). Functionally, microtubule-associated force-producing protein that may play a role in organelle transport. Has ATPase activity. Involved in synaptic transmission. Mediates dendritic trafficking of mRNAs. Required for anterograde axonal transportation of MAPK8IP3/JIP3 which is essential for MAPK8IP3/JIP3 function in axon elongation. The polypeptide is Kinesin heavy chain isoform 5C (Kif5c) (Mus musculus (Mouse)).